The chain runs to 199 residues: Recombination protein RecR (199 aa).

The C4-type zinc-finger motif lies at 56-71; it reads CSICFNVSQDDQCRIC. One can recognise a Toprim domain in the interval 79–174; sequence SVLCVVEEYK…RVTRLASGLP (96 aa).

It belongs to the RecR family.

Its function is as follows. May play a role in DNA repair. It seems to be involved in an RecBC-independent recombinational process of DNA repair. It may act with RecF and RecO. The sequence is that of Recombination protein RecR from Nocardioides sp. (strain ATCC BAA-499 / JS614).